We begin with the raw amino-acid sequence, 142 residues long: uncharacterized protein (142 aa).

The tract at residues 1 to 31 (MSLPKKKKPEVEEEEKPEEEEEKEEEQEIDI) is disordered. Residues 11 to 29 (VEEEEKPEEEEEKEEEQEI) show a composition bias toward acidic residues.

This is an uncharacterized protein from Acidianus sp. F28 (AFV-2).